A 576-amino-acid polypeptide reads, in one-letter code: MDIKLLYRLAKYLRFYKKDLIIVMISLLSVSASLLLIGSVFRNLIDKGLAEDNILSVNKSILYICLLIVILSVASFFRSYFINNVAEKIVNQIRKEAYSNLINYEIEEYEELKIGDIISRLTNDIDQIATLIVNFLSFFIRNSVMLIGGITLMFFESFKLASIVIVTIPILLVPLIKFGKHVKSLSKKALESKSLLVSDIDETFNNIRVIYAFNHQINKISDFDTKLQSYLIYCKIRLKIRALFFAISIAVIFLTITLIVWIGASDIVQGDLSAGQIISFIYYAIIAGVSSGGIFELLSEIHLPTTALERIITIIDKISIVHNNYYALNNPDTVSIEFKNVDFTYNSRPNLKIINNMSLKINANKFVGIVGRSGAGKSTLIQLLLRFYRQDNGTILINNQDISRINPTDIRKFIAYVPQEASIFSDTIKSNIIFGNNKASDYEINEIIKITGIEEFSNKLHDGINTKIGEKGVRLSGGQKQRIAIARALLRKPKILLLDEAMSALDTMSEQKLLNAIKKIMKGNIIISIAHRISSIESADYILVIDKGKVVTAGSHYDLSKNSEIYRNICREQLTI.

Residues 20 to 303 (LIIVMISLLS…IFELLSEIHL (284 aa)) enclose the ABC transmembrane type-1 domain. 6 helical membrane-spanning segments follow: residues 21–41 (IIVM…GSVF), 61–81 (ILYI…RSYF), 135–155 (FLSF…LMFF), 158–178 (FKLA…LIKF), 242–262 (ALFF…IVWI), and 277–297 (IISF…IFEL). The ABC transporter domain maps to 336–572 (IEFKNVDFTY…SEIYRNICRE (237 aa)). Residue 371 to 378 (GRSGAGKS) participates in ATP binding.

It belongs to the ABC transporter superfamily. As to quaternary structure, homodimer.

It is found in the cell inner membrane. Functionally, part of an ABC transporter complex. Transmembrane domains (TMD) form a pore in the inner membrane and the ATP-binding domain (NBD) is responsible for energy generation. The sequence is that of Putative export ATP-binding/permease protein RT0691 from Rickettsia typhi (strain ATCC VR-144 / Wilmington).